The following is a 123-amino-acid chain: Holo-[acyl-carrier-protein] synthase (123 aa).

Residues D9 and E57 each contribute to the Mg(2+) site.

The protein belongs to the P-Pant transferase superfamily. AcpS family. It depends on Mg(2+) as a cofactor.

Its subcellular location is the cytoplasm. The enzyme catalyses apo-[ACP] + CoA = holo-[ACP] + adenosine 3',5'-bisphosphate + H(+). Functionally, transfers the 4'-phosphopantetheine moiety from coenzyme A to a Ser of acyl-carrier-protein. This chain is Holo-[acyl-carrier-protein] synthase, found in Streptomyces coelicolor (strain ATCC BAA-471 / A3(2) / M145).